The primary structure comprises 362 residues: 11-beta-hydroxysteroid dehydrogenase B (362 aa).

A helical; Signal-anchor for type II membrane protein membrane pass occupies residues 10–30; it reads FVVPPASLLMLAFTWPTLFFI. Residues 13–26 carry the Proline-knob motif; that stretch reads PPASLLMLAFTWPT. 55–81 provides a ligand contact to NADP(+); the sequence is GASSGIGEQIAYQYAKRGANLVLVARR. Ser185 is a substrate binding site. Tyr198 functions as the Proton acceptor in the catalytic mechanism. NADP(+) is bound by residues 198–202 and Lys202; that span reads YSAAK. Residues 321-362 form a disordered region; the sequence is TGRPLLETSSPRRSAVMEGSSPRRLPPGPLTFSPAFQQQKSE.

It belongs to the short-chain dehydrogenases/reductases (SDR) family. In terms of tissue distribution, expressed in seeds (at protein level). Not expressed in stem, leaf or root (at protein level).

Its subcellular location is the lipid droplet. It is found in the membrane. The enzyme catalyses an 11beta-hydroxysteroid + NADP(+) = an 11-oxosteroid + NADPH + H(+). The catalysed reaction is corticosterone + NADP(+) = 11-dehydrocorticosterone + NADPH + H(+). It catalyses the reaction 17beta-estradiol + NADP(+) = estrone + NADPH + H(+). Functionally, has dehydrogenase activity against corticosterone (11 beta-hydroxysteroid) and estradiol (17 beta-hydroxysteroid), with similar activities to both sterols in the presence of NADP(+), but negligible activity to either sterol in the presence of NAD(+). May be involved in signal transduction regulated by various sterols. This is 11-beta-hydroxysteroid dehydrogenase B from Sesamum indicum (Oriental sesame).